The sequence spans 148 residues: Large ribosomal subunit protein uL15 (148 aa).

The disordered stretch occupies residues 1–46; it reads MITIEDLKPTPGSNKKYKRLGRGQGSGKGKTAGKGHKGQKSRGTGK. Over residues 31–45 the composition is skewed to basic residues; the sequence is TAGKGHKGQKSRGTG.

This sequence belongs to the universal ribosomal protein uL15 family. In terms of assembly, part of the 50S ribosomal subunit.

Functionally, binds to the 23S rRNA. The sequence is that of Large ribosomal subunit protein uL15 from Fervidobacterium nodosum (strain ATCC 35602 / DSM 5306 / Rt17-B1).